We begin with the raw amino-acid sequence, 365 residues long: Uroporphyrinogen decarboxylase (365 aa).

Residues 27–31, aspartate 77, tyrosine 154, serine 209, and histidine 327 contribute to the substrate site; that span reads RQAGR.

It belongs to the uroporphyrinogen decarboxylase family. Homodimer.

Its subcellular location is the cytoplasm. The enzyme catalyses uroporphyrinogen III + 4 H(+) = coproporphyrinogen III + 4 CO2. It functions in the pathway porphyrin-containing compound metabolism; protoporphyrin-IX biosynthesis; coproporphyrinogen-III from 5-aminolevulinate: step 4/4. Catalyzes the decarboxylation of four acetate groups of uroporphyrinogen-III to yield coproporphyrinogen-III. The polypeptide is Uroporphyrinogen decarboxylase (Alkalilimnicola ehrlichii (strain ATCC BAA-1101 / DSM 17681 / MLHE-1)).